Here is a 274-residue protein sequence, read N- to C-terminus: Putative pyruvate, phosphate dikinase regulatory protein 1 (274 aa).

ADP is bound at residue 149 to 156; sequence GISRTSKT.

Belongs to the pyruvate, phosphate/water dikinase regulatory protein family. PDRP subfamily.

The catalysed reaction is N(tele)-phospho-L-histidyl/L-threonyl-[pyruvate, phosphate dikinase] + ADP = N(tele)-phospho-L-histidyl/O-phospho-L-threonyl-[pyruvate, phosphate dikinase] + AMP + H(+). It catalyses the reaction N(tele)-phospho-L-histidyl/O-phospho-L-threonyl-[pyruvate, phosphate dikinase] + phosphate + H(+) = N(tele)-phospho-L-histidyl/L-threonyl-[pyruvate, phosphate dikinase] + diphosphate. Functionally, bifunctional serine/threonine kinase and phosphorylase involved in the regulation of the pyruvate, phosphate dikinase (PPDK) by catalyzing its phosphorylation/dephosphorylation. In Listeria welshimeri serovar 6b (strain ATCC 35897 / DSM 20650 / CCUG 15529 / CIP 8149 / NCTC 11857 / SLCC 5334 / V8), this protein is Putative pyruvate, phosphate dikinase regulatory protein 1.